Reading from the N-terminus, the 267-residue chain is Acryloyl-CoA reductase electron transfer subunit gamma (267 aa).

As to quaternary structure, heterohexadecamer; tetramer of tetramers. Each tetramer is composed of 2 alpha (AcrC), a beta (AcrA) and a gamma (AcrB) subunit.

Its subcellular location is the cytoplasm. Functionally, part of the ETF-acryloyl-CoA reductase complex involved in the pathway of L-alanine fermentation. The electron transfer flavoprotein (ETF) serves as a specific electron acceptor for acryloyl-CoA reductase. The chain is Acryloyl-CoA reductase electron transfer subunit gamma (acrB) from Anaerotignum propionicum (Clostridium propionicum).